A 507-amino-acid chain; its full sequence is WD-40 repeat-containing protein MSI4 (507 aa).

At M1 the chain carries N-acetylmethionine. The interval 1-66 (MESDEAAAVS…KTQQSPSVDE (66 aa)) is disordered. WD repeat units lie at residues 95–137 (RWGP…KPRV), 162–202 (IHPG…NRHA), and 217–257 (GHQD…TTIG). Over residues 258 to 272 (TDSKSSGSIIKQTGE) the composition is skewed to polar residues. Residues 258-282 (TDSKSSGSIIKQTGEGTDKNESPTV) form a disordered region. WD repeat units lie at residues 290–330 (GHED…NPVT), 335–375 (AHDA…ANGV), 384–424 (GHKA…KKSD), and 439–486 (GHRD…YRPE). Positions 308-323 (FCSVGDDSCLILWDAR) match the DWD box motif.

It belongs to the WD repeat RBAP46/RBAP48/MSI1 family. Interacts with AHL16 and HOS1. Interacts with LHP1, PDP1, PDP2 and PDP3. Component of the PRC2 (polycomb repressive complex 2) complex which regulates histone methylation on histone H3K27. As to expression, expressed in rosette leaves, cauline leaves, main stems and developing fruits. Expressed at higher levels in roots and flowers.

The protein resides in the nucleus. Core histone-binding subunit that may target chromatin assembly factors, chromatin remodeling factors and histone deacetylases to their histone substrates in a manner that is regulated by nucleosomal DNA. Component of the flowering autonomous pathway which positively regulates flowering by promoting transcriptional repression of the flowering repressor FLC. May promote histone deacetylation at the FLC locus leading to the formation of repressive chromatin structures. Forms a histone deacetylase complex with HDA5, HDA6 and FLD that represses FLC gene expression to control flowering time. Also negatively regulates cold-responsive genes. Acts together with PDP1 and MSI5 to regulate the function of the PRC2 complex on FLC. Required for systemic acquired resistance (SAR) toward pathogenic bacteria (e.g. Pseudomonas syringae pv tomato DC3000 (avrPto)). Together with FLD and MSI4/FVE, contributes to dehydroabietinal-dependent (DA, a diterpenoid tricyclic diterpene) activation of flowering ans SAR. This Arabidopsis thaliana (Mouse-ear cress) protein is WD-40 repeat-containing protein MSI4.